The sequence spans 185 residues: Ribosome-recycling factor (185 aa).

Belongs to the RRF family.

Its subcellular location is the cytoplasm. Responsible for the release of ribosomes from messenger RNA at the termination of protein biosynthesis. May increase the efficiency of translation by recycling ribosomes from one round of translation to another. The chain is Ribosome-recycling factor from Desulfatibacillum aliphaticivorans.